Reading from the N-terminus, the 67-residue chain is Brevinin-1CDYa (67 aa).

Positions 1–22 (MFTLKKSLLLIFFLGTINLSLC) are cleaved as a signal peptide. Residues 23–45 (EEERNADEEERRDDLEERDVEVE) constitute a propeptide that is removed on maturation. A disulfide bond links Cys61 and Cys67.

It belongs to the frog skin active peptide (FSAP) family. Brevinin subfamily. Expressed by the skin glands.

The protein resides in the secreted. Its function is as follows. Antimicrobial peptide. Has low activity against the Gram-positive bacterium S.aureus (MIC=12.5 uM) and the Gram-negative bacterium E.coli (MIC=25 uM). Has weak hemolytic activity against human erythrocytes. The polypeptide is Brevinin-1CDYa (Rana dybowskii (Dybovsky's frog)).